The chain runs to 64 residues: DNA gyrase inhibitor YacG (64 aa).

Positions 9, 12, 28, and 32 each coordinate Zn(2+). The disordered stretch occupies residues 45–64; the sequence is KRIPSAGDLSDSDDWSEQQP. The span at 54–64 shows a compositional bias: acidic residues; the sequence is SDSDDWSEQQP.

This sequence belongs to the DNA gyrase inhibitor YacG family. Interacts with GyrB. Requires Zn(2+) as cofactor.

Inhibits all the catalytic activities of DNA gyrase by preventing its interaction with DNA. Acts by binding directly to the C-terminal domain of GyrB, which probably disrupts DNA binding by the gyrase. The chain is DNA gyrase inhibitor YacG from Klebsiella pneumoniae (strain 342).